Here is a 100-residue protein sequence, read N- to C-terminus: Large ribosomal subunit protein uL23 (100 aa).

Belongs to the universal ribosomal protein uL23 family. In terms of assembly, part of the 50S ribosomal subunit. Contacts protein L29, and trigger factor when it is bound to the ribosome.

In terms of biological role, one of the early assembly proteins it binds 23S rRNA. One of the proteins that surrounds the polypeptide exit tunnel on the outside of the ribosome. Forms the main docking site for trigger factor binding to the ribosome. The chain is Large ribosomal subunit protein uL23 from Mycolicibacterium paratuberculosis (strain ATCC BAA-968 / K-10) (Mycobacterium paratuberculosis).